The chain runs to 124 residues: Putative peptidyl-tRNA hydrolase (124 aa).

This sequence belongs to the PTH2 family.

The catalysed reaction is an N-acyl-L-alpha-aminoacyl-tRNA + H2O = an N-acyl-L-amino acid + a tRNA + H(+). The protein is Putative peptidyl-tRNA hydrolase of Fowlpox virus (strain NVSL) (FPV).